A 304-amino-acid polypeptide reads, in one-letter code: D-alanine--D-alanine ligase (304 aa).

Positions 101-298 constitute an ATP-grasp domain; the sequence is KKIFIKNKIL…FIKLIEWILK (198 aa). 131-184 serves as a coordination point for ATP; sequence EKNLKFPVVVKPINEGSSVHVYICDKTNILKNLKVLKSYNEILIEEFIPGREIQ. 3 residues coordinate Mg(2+): Asp-253, Glu-265, and Asn-267.

The protein belongs to the D-alanine--D-alanine ligase family. Mg(2+) is required as a cofactor. Mn(2+) serves as cofactor.

It localises to the cytoplasm. The catalysed reaction is 2 D-alanine + ATP = D-alanyl-D-alanine + ADP + phosphate + H(+). Its pathway is cell wall biogenesis; peptidoglycan biosynthesis. Functionally, cell wall formation. This chain is D-alanine--D-alanine ligase, found in Pelagibacter ubique (strain HTCC1062).